Reading from the N-terminus, the 529-residue chain is Bifunctional purine biosynthesis protein PurH (529 aa).

The MGS-like domain occupies 1-148 (MQQHRPVRRA…KNHKDVAIVV (148 aa)).

The protein belongs to the PurH family.

The catalysed reaction is (6R)-10-formyltetrahydrofolate + 5-amino-1-(5-phospho-beta-D-ribosyl)imidazole-4-carboxamide = 5-formamido-1-(5-phospho-D-ribosyl)imidazole-4-carboxamide + (6S)-5,6,7,8-tetrahydrofolate. It catalyses the reaction IMP + H2O = 5-formamido-1-(5-phospho-D-ribosyl)imidazole-4-carboxamide. It participates in purine metabolism; IMP biosynthesis via de novo pathway; 5-formamido-1-(5-phospho-D-ribosyl)imidazole-4-carboxamide from 5-amino-1-(5-phospho-D-ribosyl)imidazole-4-carboxamide (10-formyl THF route): step 1/1. Its pathway is purine metabolism; IMP biosynthesis via de novo pathway; IMP from 5-formamido-1-(5-phospho-D-ribosyl)imidazole-4-carboxamide: step 1/1. The protein is Bifunctional purine biosynthesis protein PurH of Erwinia tasmaniensis (strain DSM 17950 / CFBP 7177 / CIP 109463 / NCPPB 4357 / Et1/99).